A 299-amino-acid chain; its full sequence is Cytidine deaminase (299 aa).

2 consecutive CMP/dCMP-type deaminase domains span residues 56 to 176 (SKIE…FGPK) and 194 to 299 (LQGD…YIAV). 97–99 (NQE) contributes to the substrate binding site. Histidine 110 contacts Zn(2+). The Proton donor role is filled by glutamate 112. Positions 137 and 140 each coordinate Zn(2+).

It belongs to the cytidine and deoxycytidylate deaminase family. As to quaternary structure, homodimer. The cofactor is Zn(2+).

It catalyses the reaction cytidine + H2O + H(+) = uridine + NH4(+). The catalysed reaction is 2'-deoxycytidine + H2O + H(+) = 2'-deoxyuridine + NH4(+). Functionally, this enzyme scavenges exogenous and endogenous cytidine and 2'-deoxycytidine for UMP synthesis. This chain is Cytidine deaminase, found in Haemophilus ducreyi (strain 35000HP / ATCC 700724).